The primary structure comprises 340 residues: Phenylalanine--tRNA ligase alpha subunit (340 aa).

Glutamate 255 provides a ligand contact to Mg(2+).

The protein belongs to the class-II aminoacyl-tRNA synthetase family. Phe-tRNA synthetase alpha subunit type 1 subfamily. As to quaternary structure, tetramer of two alpha and two beta subunits. Requires Mg(2+) as cofactor.

The protein localises to the cytoplasm. The enzyme catalyses tRNA(Phe) + L-phenylalanine + ATP = L-phenylalanyl-tRNA(Phe) + AMP + diphosphate + H(+). This Exiguobacterium sp. (strain ATCC BAA-1283 / AT1b) protein is Phenylalanine--tRNA ligase alpha subunit.